Here is a 254-residue protein sequence, read N- to C-terminus: 5-oxoprolinase subunit A (254 aa).

It belongs to the LamB/PxpA family. In terms of assembly, forms a complex composed of PxpA, PxpB and PxpC.

The enzyme catalyses 5-oxo-L-proline + ATP + 2 H2O = L-glutamate + ADP + phosphate + H(+). Functionally, catalyzes the cleavage of 5-oxoproline to form L-glutamate coupled to the hydrolysis of ATP to ADP and inorganic phosphate. The protein is 5-oxoprolinase subunit A of Acinetobacter baumannii (strain ATCC 17978 / DSM 105126 / CIP 53.77 / LMG 1025 / NCDC KC755 / 5377).